Reading from the N-terminus, the 258-residue chain is tRNA (guanine-N(7)-)-methyltransferase (258 aa).

Residues G76, 99-100 (EI), 132-133 (NA), and L152 each bind S-adenosyl-L-methionine. The active site involves D155. 230–232 (TEE) serves as a coordination point for S-adenosyl-L-methionine.

Belongs to the class I-like SAM-binding methyltransferase superfamily. TrmB family.

It localises to the nucleus. The enzyme catalyses guanosine(46) in tRNA + S-adenosyl-L-methionine = N(7)-methylguanosine(46) in tRNA + S-adenosyl-L-homocysteine. It participates in tRNA modification; N(7)-methylguanine-tRNA biosynthesis. Catalyzes the formation of N(7)-methylguanine at position 46 (m7G46) in tRNA. The chain is tRNA (guanine-N(7)-)-methyltransferase from Brugia malayi (Filarial nematode worm).